Reading from the N-terminus, the 374-residue chain is Serine/threonine-protein kinase-transforming protein mos (374 aa).

Residues 94-370 (VCLMHRLGSG…LLQRDLKAFR (277 aa)) enclose the Protein kinase domain. ATP is bound by residues 100-108 (LGSGGFGSV) and Lys-121. The active-site Proton acceptor is Asp-229.

The protein belongs to the protein kinase superfamily. Ser/Thr protein kinase family.

The enzyme catalyses L-seryl-[protein] + ATP = O-phospho-L-seryl-[protein] + ADP + H(+). The catalysed reaction is L-threonyl-[protein] + ATP = O-phospho-L-threonyl-[protein] + ADP + H(+). The protein is Serine/threonine-protein kinase-transforming protein mos (V-MOS) of Mus musculus (Mouse).